We begin with the raw amino-acid sequence, 425 residues long: Proline--tRNA ligase (425 aa).

It belongs to the class-II aminoacyl-tRNA synthetase family. ProS type 2 subfamily. In terms of assembly, homodimer.

The protein localises to the cytoplasm. The catalysed reaction is tRNA(Pro) + L-proline + ATP = L-prolyl-tRNA(Pro) + AMP + diphosphate. Functionally, catalyzes the attachment of proline to tRNA(Pro) in a two-step reaction: proline is first activated by ATP to form Pro-AMP and then transferred to the acceptor end of tRNA(Pro). The polypeptide is Proline--tRNA ligase (Wolbachia sp. subsp. Brugia malayi (strain TRS)).